Reading from the N-terminus, the 88-residue chain is Cell division topological specificity factor (88 aa).

This sequence belongs to the MinE family.

Its function is as follows. Prevents the cell division inhibition by proteins MinC and MinD at internal division sites while permitting inhibition at polar sites. This ensures cell division at the proper site by restricting the formation of a division septum at the midpoint of the long axis of the cell. The polypeptide is Cell division topological specificity factor (Citrobacter koseri (strain ATCC BAA-895 / CDC 4225-83 / SGSC4696)).